A 309-amino-acid chain; its full sequence is Ferredoxin--NADP reductase (309 aa).

7 residues coordinate FAD: D25, Q33, Y38, V77, F107, D267, and T307.

It belongs to the ferredoxin--NADP reductase type 2 family. In terms of assembly, homodimer. FAD serves as cofactor.

It catalyses the reaction 2 reduced [2Fe-2S]-[ferredoxin] + NADP(+) + H(+) = 2 oxidized [2Fe-2S]-[ferredoxin] + NADPH. In Lactobacillus acidophilus (strain ATCC 700396 / NCK56 / N2 / NCFM), this protein is Ferredoxin--NADP reductase.